A 107-amino-acid chain; its full sequence is Anti-adapter protein IraM (107 aa).

It belongs to the IraM/RssC family.

The protein resides in the cytoplasm. Its function is as follows. Inhibits RpoS proteolysis by regulating RssB activity, thereby increasing the stability of the sigma stress factor RpoS during magnesium starvation. This Escherichia coli O17:K52:H18 (strain UMN026 / ExPEC) protein is Anti-adapter protein IraM.